The sequence spans 206 residues: Outer-membrane lipoprotein LolB (206 aa).

The first 18 residues, 1 to 18, serve as a signal peptide directing secretion; that stretch reads MKTFKFFTALFATAILTA. Residue cysteine 19 is the site of N-palmitoyl cysteine attachment. The S-diacylglycerol cysteine moiety is linked to residue cysteine 19.

This sequence belongs to the LolB family. Monomer.

The protein resides in the cell outer membrane. In terms of biological role, plays a critical role in the incorporation of lipoproteins in the outer membrane after they are released by the LolA protein. The protein is Outer-membrane lipoprotein LolB of Haemophilus influenzae (strain PittGG).